Here is a 363-residue protein sequence, read N- to C-terminus: Chorismate synthase (363 aa).

R48 serves as a coordination point for NADP(+). Residues R125–S127, N238–A239, G278, K293–S297, and R319 each bind FMN.

This sequence belongs to the chorismate synthase family. As to quaternary structure, homotetramer. FMNH2 is required as a cofactor.

It catalyses the reaction 5-O-(1-carboxyvinyl)-3-phosphoshikimate = chorismate + phosphate. It functions in the pathway metabolic intermediate biosynthesis; chorismate biosynthesis; chorismate from D-erythrose 4-phosphate and phosphoenolpyruvate: step 7/7. In terms of biological role, catalyzes the anti-1,4-elimination of the C-3 phosphate and the C-6 proR hydrogen from 5-enolpyruvylshikimate-3-phosphate (EPSP) to yield chorismate, which is the branch point compound that serves as the starting substrate for the three terminal pathways of aromatic amino acid biosynthesis. This reaction introduces a second double bond into the aromatic ring system. The sequence is that of Chorismate synthase from Acinetobacter baumannii (strain AB0057).